The chain runs to 4318 residues: Cytoplasmic dynein 2 heavy chain 1 (4318 aa).

The interval 1-1658 (MPAEDARKEY…IMRMVDAEFQ (1658 aa)) is stem. 147 to 154 (LKSLVRKQ) provides a ligand contact to ATP. 2 coiled-coil regions span residues 1328-1354 (DKATIWEQRLADLDEYLQNLNQIQRKW) and 1402-1431 (LRTTLTTLLDQLQRCQKALNEFLEEKRSIL). AAA regions lie at residues 1659–1883 (YTYE…VLRG), 1951–2171 (DAIR…RQGD), 2261–2515 (ASDF…WVLG), and 2623–2871 (TFAR…SSSV). 1697-1704 (GPAGTGKT) is a binding site for ATP. Residues 1959 to 1986 (EHNLVVMETQVKKALELYEQLRQRMGVV) adopt a coiled-coil conformation. ATP is bound by residues 1989–1996 (GPSGSGKS), 2301–2308 (GPDGCGKG), and 2661–2668 (GRSGVGRR). Positions 2888–3176 (DVYRRKKQGV…YELEKEQETI (289 aa)) are stalk. Coiled-coil stretches lie at residues 2908–2989 (VAKL…AEIE) and 3423–3480 (QHEK…KTKE). AAA regions lie at residues 3251–3487 (LSTE…TITQ) and 3699–3914 (MTFF…IIDR).

Belongs to the dynein heavy chain family. As to quaternary structure, the cytoplasmic dynein complex 2 is probably composed by a heavy chain DYH1B homodimer and a number of light intermediate chains.

Its subcellular location is the cytoplasm. It is found in the cytoskeleton. The protein localises to the cilium axoneme. It localises to the cell membrane. Functionally, may function as a motor for intraflagellar retrograde transport. Functions in cilia biogenesis. The protein is Cytoplasmic dynein 2 heavy chain 1 (DYH1B) of Tripneustes gratilla (Hawaian sea urchin).